The chain runs to 214 residues: Pyridoxine/pyridoxamine 5'-phosphate oxidase (214 aa).

Substrate contacts are provided by residues 8–11 (RINY) and Lys66. FMN is bound by residues 61–66 (RILLIK), 76–77 (FT), Arg82, Lys83, and Gln105. Substrate-binding residues include Tyr123, Arg127, and Ser131. FMN-binding positions include 140–141 (QS) and Trp184. 190–192 (RLH) provides a ligand contact to substrate. Arg194 provides a ligand contact to FMN.

The protein belongs to the pyridoxamine 5'-phosphate oxidase family. In terms of assembly, homodimer. Requires FMN as cofactor.

The enzyme catalyses pyridoxamine 5'-phosphate + O2 + H2O = pyridoxal 5'-phosphate + H2O2 + NH4(+). The catalysed reaction is pyridoxine 5'-phosphate + O2 = pyridoxal 5'-phosphate + H2O2. It participates in cofactor metabolism; pyridoxal 5'-phosphate salvage; pyridoxal 5'-phosphate from pyridoxamine 5'-phosphate: step 1/1. The protein operates within cofactor metabolism; pyridoxal 5'-phosphate salvage; pyridoxal 5'-phosphate from pyridoxine 5'-phosphate: step 1/1. Functionally, catalyzes the oxidation of either pyridoxine 5'-phosphate (PNP) or pyridoxamine 5'-phosphate (PMP) into pyridoxal 5'-phosphate (PLP). This chain is Pyridoxine/pyridoxamine 5'-phosphate oxidase, found in Burkholderia vietnamiensis (strain G4 / LMG 22486) (Burkholderia cepacia (strain R1808)).